We begin with the raw amino-acid sequence, 208 residues long: Large ribosomal subunit protein uL4 (208 aa).

Positions 45-89 are disordered; it reads RQGTHAHKNRSAVSGGGKKPWRQKGTGRARQGSTRSPQWRGGGTV.

This sequence belongs to the universal ribosomal protein uL4 family. In terms of assembly, part of the 50S ribosomal subunit.

In terms of biological role, one of the primary rRNA binding proteins, this protein initially binds near the 5'-end of the 23S rRNA. It is important during the early stages of 50S assembly. It makes multiple contacts with different domains of the 23S rRNA in the assembled 50S subunit and ribosome. Its function is as follows. Forms part of the polypeptide exit tunnel. The polypeptide is Large ribosomal subunit protein uL4 (Lactococcus lactis subsp. cremoris (strain SK11)).